Consider the following 440-residue polypeptide: Xylose isomerase (440 aa).

Residues His100 and Asp103 contribute to the active site. Mg(2+)-binding residues include Glu231, Glu267, His270, Asp295, Asp306, Asp308, and Asp338.

Belongs to the xylose isomerase family. As to quaternary structure, homotetramer. Requires Mg(2+) as cofactor.

Its subcellular location is the cytoplasm. It carries out the reaction alpha-D-xylose = alpha-D-xylulofuranose. The sequence is that of Xylose isomerase from Burkholderia thailandensis (strain ATCC 700388 / DSM 13276 / CCUG 48851 / CIP 106301 / E264).